The primary structure comprises 122 residues: Large ribosomal subunit protein uL14c (122 aa).

Belongs to the universal ribosomal protein uL14 family. Part of the 50S ribosomal subunit.

The protein localises to the plastid. In terms of biological role, binds to 23S rRNA. This Cuscuta reflexa (Southern Asian dodder) protein is Large ribosomal subunit protein uL14c.